The chain runs to 621 residues: KIF-binding protein (621 aa).

Residues 51–75 (GPAPEDEDERPEAEDGPGAGDHALG) are disordered. Positions 54-65 (PEDEDERPEAED) are enriched in acidic residues. Residue Ser178 is modified to Phosphoserine.

This sequence belongs to the KIF-binding protein family. Interacts with KIF1B; positively regulates KIF1B microtubule motor activity. Interacts with STMN2. Highly expressed in heart, brain, ovary, testis, spinal cord and all specific brain regions examined. Moderate expressed at intermediate level in all other adult tissues examined, as well as in fetal liver and brain. Not expressed in blood leukocytes.

It is found in the cytoplasm. It localises to the cytoskeleton. Activator of KIF1B plus-end-directed microtubule motor activity. Required for organization of axonal microtubules, and axonal outgrowth and maintenance during peripheral and central nervous system development. The sequence is that of KIF-binding protein from Homo sapiens (Human).